Consider the following 108-residue polypeptide: DNA-binding protein HBbu (108 aa).

It belongs to the bacterial histone-like protein family.

In terms of biological role, histone-like DNA-binding protein which is capable of wrapping DNA to stabilize it, and thus to prevent its denaturation under extreme environmental conditions. The protein is DNA-binding protein HBbu (hbb) of Borreliella afzelii (Borrelia afzelii).